Here is a 482-residue protein sequence, read N- to C-terminus: High affinity 3',5'-cyclic-AMP phosphodiesterase 7A (482 aa).

At S84 the chain carries Phosphoserine. The PDEase domain occupies 136–458; that stretch reads LDDDYNGQAK…ASWKGLQREQ (323 aa). The active-site Proton donor is the H212. 4 residues coordinate a divalent metal cation: H216, H252, D253, and D362.

This sequence belongs to the cyclic nucleotide phosphodiesterase family. PDE7 subfamily. In terms of assembly, interacts with CBFA2T3. It depends on a divalent metal cation as a cofactor. As to expression, found at high levels in skeletal muscle and at low levels in a variety of tissues including brain and heart. It is expressed as well in two T-cell lines. Found abundantly in skeletal muscle and at low levels in heart.

The protein localises to the cytoplasm. Its subcellular location is the cytosol. The enzyme catalyses 3',5'-cyclic AMP + H2O = AMP + H(+). It participates in purine metabolism; 3',5'-cyclic AMP degradation; AMP from 3',5'-cyclic AMP: step 1/1. With respect to regulation, insensitive to all selective PDE inhibitors. Its function is as follows. Hydrolyzes the second messenger cAMP, which is a key regulator of many important physiological processes. May have a role in muscle signal transduction. The chain is High affinity 3',5'-cyclic-AMP phosphodiesterase 7A from Homo sapiens (Human).